The following is a 433-amino-acid chain: Phosphomethylpyrimidine synthase (433 aa).

Residues N68, M97, Y126, H162, 184 to 186 (SRG), 225 to 228 (DALR), and E264 contribute to the substrate site. H268 is a binding site for Zn(2+). Position 291 (Y291) interacts with substrate. A Zn(2+)-binding site is contributed by H332. [4Fe-4S] cluster is bound by residues C408, C411, and C415.

The protein belongs to the ThiC family. [4Fe-4S] cluster serves as cofactor.

It catalyses the reaction 5-amino-1-(5-phospho-beta-D-ribosyl)imidazole + S-adenosyl-L-methionine = 4-amino-2-methyl-5-(phosphooxymethyl)pyrimidine + CO + 5'-deoxyadenosine + formate + L-methionine + 3 H(+). It participates in cofactor biosynthesis; thiamine diphosphate biosynthesis. In terms of biological role, catalyzes the synthesis of the hydroxymethylpyrimidine phosphate (HMP-P) moiety of thiamine from aminoimidazole ribotide (AIR) in a radical S-adenosyl-L-methionine (SAM)-dependent reaction. The sequence is that of Phosphomethylpyrimidine synthase from Fusobacterium nucleatum subsp. nucleatum (strain ATCC 25586 / DSM 15643 / BCRC 10681 / CIP 101130 / JCM 8532 / KCTC 2640 / LMG 13131 / VPI 4355).